Consider the following 535-residue polypeptide: Arylsulfatase K (535 aa).

The signal sequence occupies residues 1–22 (MLLLWLSVFAASALAAPDRGAG). Ca(2+) contacts are provided by aspartate 44 and cysteine 84. Catalysis depends on cysteine 84, which acts as the Nucleophile. 3-oxoalanine (Cys) is present on cysteine 84. An N-linked (GlcNAc...) asparagine glycan is attached at asparagine 112. Lysine 132 contributes to the substrate binding site. The N-linked (GlcNAc...) asparagine glycan is linked to asparagine 197. Histidine 255 lines the substrate pocket. An N-linked (GlcNAc...) asparagine glycan is attached at asparagine 266. Residues aspartate 317 and histidine 318 each contribute to the Ca(2+) site. Asparagine 379, asparagine 417, and asparagine 502 each carry an N-linked (GlcNAc...) asparagine glycan.

It belongs to the sulfatase family. Requires Ca(2+) as cofactor. Post-translationally, the conversion to 3-oxoalanine (also known as C-formylglycine, FGly), of a serine or cysteine residue in prokaryotes and of a cysteine residue in eukaryotes, is critical for catalytic activity. In terms of processing, the 75-kDa precursor undergoes proteolytic processing to yield a 23 kDa form. N-glycosylated with both high mannose and complex type sugars.

Its subcellular location is the secreted. It localises to the lysosome. The catalysed reaction is an aryl sulfate + H2O = a phenol + sulfate + H(+). The enzyme catalyses Hydrolysis of the 2-sulfate groups of the 2-O-sulfo-D-glucuronate residues of chondroitin sulfate, heparin and heparitin sulfate.. Catalyzes the hydrolysis of pseudosubstrates such as p-nitrocatechol sulfate and p-nitrophenyl sulfate. Catalyzes the hydrolysis of the 2-sulfate groups of the 2-O-sulfo-D-glucuronate residues of chondroitin sulfate, heparin and heparitin sulfate. Acts selectively on 2-sulfoglucuronate and lacks activity against 2-sulfoiduronate. In Canis lupus familiaris (Dog), this protein is Arylsulfatase K (ARSK).